A 100-amino-acid chain; its full sequence is Small ribosomal subunit protein uS14c (100 aa).

The span at 1–10 (MARKGLIERE) shows a compositional bias: basic and acidic residues. Residues 1 to 29 (MARKGLIEREKKRKKLEQKYHSIRGSSKK) form a disordered region.

This sequence belongs to the universal ribosomal protein uS14 family. As to quaternary structure, part of the 30S ribosomal subunit.

Its subcellular location is the plastid. It is found in the chloroplast. In terms of biological role, binds 16S rRNA, required for the assembly of 30S particles. The sequence is that of Small ribosomal subunit protein uS14c from Acorus calamus (Sweet flag).